The primary structure comprises 122 residues: Large ribosomal subunit protein bL12 (122 aa).

This sequence belongs to the bacterial ribosomal protein bL12 family. As to quaternary structure, homodimer. Part of the ribosomal stalk of the 50S ribosomal subunit. Forms a multimeric L10(L12)X complex, where L10 forms an elongated spine to which 2 to 4 L12 dimers bind in a sequential fashion. Binds GTP-bound translation factors.

Functionally, forms part of the ribosomal stalk which helps the ribosome interact with GTP-bound translation factors. Is thus essential for accurate translation. The chain is Large ribosomal subunit protein bL12 from Stutzerimonas stutzeri (strain A1501) (Pseudomonas stutzeri).